We begin with the raw amino-acid sequence, 123 residues long: Large ribosomal subunit protein bL12 (123 aa).

This sequence belongs to the bacterial ribosomal protein bL12 family. As to quaternary structure, homodimer. Part of the ribosomal stalk of the 50S ribosomal subunit. Forms a multimeric L10(L12)X complex, where L10 forms an elongated spine to which 2 to 4 L12 dimers bind in a sequential fashion. Binds GTP-bound translation factors.

Forms part of the ribosomal stalk which helps the ribosome interact with GTP-bound translation factors. Is thus essential for accurate translation. The polypeptide is Large ribosomal subunit protein bL12 (Salmonella arizonae (strain ATCC BAA-731 / CDC346-86 / RSK2980)).